The chain runs to 232 residues: Enolase-phosphatase E1 (232 aa).

This sequence belongs to the HAD-like hydrolase superfamily. MasA/MtnC family. As to quaternary structure, monomer. Mg(2+) is required as a cofactor.

The enzyme catalyses 5-methylsulfanyl-2,3-dioxopentyl phosphate + H2O = 1,2-dihydroxy-5-(methylsulfanyl)pent-1-en-3-one + phosphate. It functions in the pathway amino-acid biosynthesis; L-methionine biosynthesis via salvage pathway; L-methionine from S-methyl-5-thio-alpha-D-ribose 1-phosphate: step 3/6. Its pathway is amino-acid biosynthesis; L-methionine biosynthesis via salvage pathway; L-methionine from S-methyl-5-thio-alpha-D-ribose 1-phosphate: step 4/6. Functionally, bifunctional enzyme that catalyzes the enolization of 2,3-diketo-5-methylthiopentyl-1-phosphate (DK-MTP-1-P) into the intermediate 2-hydroxy-3-keto-5-methylthiopentenyl-1-phosphate (HK-MTPenyl-1-P), which is then dephosphorylated to form the acireductone 1,2-dihydroxy-3-keto-5-methylthiopentene (DHK-MTPene). This is Enolase-phosphatase E1 from Xanthomonas axonopodis pv. citri (strain 306).